A 463-amino-acid chain; its full sequence is Fumarate hydratase class II (463 aa).

Substrate is bound by residues serine 95–threonine 97, histidine 126–aspartate 129, serine 136–asparagine 138, and threonine 184. The active-site Proton donor/acceptor is the histidine 185. Residue serine 315 is part of the active site. Residues serine 316 and lysine 321–asparagine 323 contribute to the substrate site.

This sequence belongs to the class-II fumarase/aspartase family. Fumarase subfamily. As to quaternary structure, homotetramer.

The protein localises to the cytoplasm. The enzyme catalyses (S)-malate = fumarate + H2O. Its pathway is carbohydrate metabolism; tricarboxylic acid cycle; (S)-malate from fumarate: step 1/1. Involved in the TCA cycle. Catalyzes the stereospecific interconversion of fumarate to L-malate. In Chlamydia trachomatis serovar D (strain ATCC VR-885 / DSM 19411 / UW-3/Cx), this protein is Fumarate hydratase class II.